A 138-amino-acid polypeptide reads, in one-letter code: Cytochrome b5 (138 aa).

Positions 14-90 (GRYYRLEEVQ…SETFIIGELH (77 aa)) constitute a Cytochrome b5 heme-binding domain. 2 residues coordinate heme: His-49 and His-73. A helical membrane pass occupies residues 114–136 (SWSNWVIPAIAAIIVALMYRSYM).

This sequence belongs to the cytochrome b5 family.

It is found in the endoplasmic reticulum membrane. The protein localises to the microsome membrane. Functionally, cytochrome b5 is a membrane-bound hemoprotein functioning as an electron carrier for several membrane-bound oxygenases. The polypeptide is Cytochrome b5 (CYB5A) (Gallus gallus (Chicken)).